The primary structure comprises 212 residues: MSEISGIRREYTLGELHNEEVPSDPMDLFNAWLEVIRDSDIKDPTAMSVATVDENGQPFQRIVLLKRFDNHGFVFFTNLESRKAQHIANNAQVSILFPWHSLDKQVAVTGIAEPLSKTEVLKYFMSRPKESQIASWVSKQSSPISARKALESKFAEMKAKFSQGDVPLPKFWGGYLVRPKSIEFWQGGEHRLHDRFIYTKKEESWEHTRLAP.

Residues 8 to 11 (RREY) and Lys-66 contribute to the substrate site. Residues 61-66 (RIVLLK), 76-77 (FT), Arg-82, Lys-83, and Gln-105 contribute to the FMN site. Substrate is bound by residues Tyr-123, Arg-127, and Ser-131. FMN-binding positions include 140-141 (QS) and Trp-185. 191-193 (RLH) contributes to the substrate binding site. Arg-195 contributes to the FMN binding site.

This sequence belongs to the pyridoxamine 5'-phosphate oxidase family. In terms of assembly, homodimer. FMN is required as a cofactor.

It catalyses the reaction pyridoxamine 5'-phosphate + O2 + H2O = pyridoxal 5'-phosphate + H2O2 + NH4(+). It carries out the reaction pyridoxine 5'-phosphate + O2 = pyridoxal 5'-phosphate + H2O2. The protein operates within cofactor metabolism; pyridoxal 5'-phosphate salvage; pyridoxal 5'-phosphate from pyridoxamine 5'-phosphate: step 1/1. It functions in the pathway cofactor metabolism; pyridoxal 5'-phosphate salvage; pyridoxal 5'-phosphate from pyridoxine 5'-phosphate: step 1/1. Catalyzes the oxidation of either pyridoxine 5'-phosphate (PNP) or pyridoxamine 5'-phosphate (PMP) into pyridoxal 5'-phosphate (PLP). The sequence is that of Pyridoxine/pyridoxamine 5'-phosphate oxidase from Shewanella pealeana (strain ATCC 700345 / ANG-SQ1).